Consider the following 517-residue polypeptide: Tyrosine-protein kinase Fgr (517 aa).

Glycine 2 carries N-myristoyl glycine lipidation. 2 S-palmitoyl cysteine lipidation sites follow: cysteine 3 and cysteine 6. A Phosphoserine modification is found at serine 13. Tyrosine 32 bears the Phosphotyrosine mark. Serine 50 carries the post-translational modification Phosphoserine. The SH3 domain maps to 65-126; that stretch reads TGVTIFVALY…PSNYVAPVDS (62 aa). Residues 102-103 form an interaction with CLNK region; sequence WW. Positions 132 to 229 constitute an SH2 domain; the sequence is WYFGKISRKD…GLCYLLTAPC (98 aa). Phosphotyrosine is present on tyrosine 196. The residue at position 206 (serine 206) is a Phosphoserine. One can recognise a Protein kinase domain in the interval 251-504; it reads IALERRLGTG…YLQSFLEDYF (254 aa). Residues 257–265 and lysine 279 each bind ATP; that span reads LGTGCFGDV. Aspartate 370 functions as the Proton acceptor in the catalytic mechanism. Tyrosine 400 carries the post-translational modification Phosphotyrosine. Tyrosine 511 is subject to Phosphotyrosine; by SRC.

This sequence belongs to the protein kinase superfamily. Tyr protein kinase family. SRC subfamily. In terms of assembly, interacts with ITGB1, ITGB2, MS4A2/FCER1B, FCER1G and FCGR2. Interacts (via SH2 domain) with SYK (tyrosine phosphorylated). Interacts (via SH2 domain) with FLT3 (tyrosine phosphorylated). Interacts with PTK2/FAK1. Interacts (via SH2 domain) with HCLS1 (tyrosine phosphorylated by SYK). Interacts with SIRPA and PTPNS1. Interacts (not phosphorylated on tyrosine residues) with CBL; FGR tyrosine phosphorylation promotes dissociation. Interacts with CLNK. In terms of processing, ubiquitinated. Becomes ubiquitinated in response to ITGB2 signaling; this does not lead to degradation. Post-translationally, phosphorylated. Autophosphorylated on tyrosine residues. Becomes phosphorylated in response to FCGR2 engagement, cell adhesion and signaling by ITGB2. Prior phosphorylation at Tyr-511 by SRC inhibits ulterior autophosphorylation at Tyr-400. Expressed in natural killer cells (at protein level).

The protein localises to the cell membrane. The protein resides in the cell projection. It localises to the ruffle membrane. Its subcellular location is the cytoplasm. It is found in the cytosol. The protein localises to the cytoskeleton. The protein resides in the mitochondrion inner membrane. It localises to the mitochondrion intermembrane space. It catalyses the reaction L-tyrosyl-[protein] + ATP = O-phospho-L-tyrosyl-[protein] + ADP + H(+). Its activity is regulated as follows. Activated by autophosphorylation. Prior phosphorylation at Tyr-511 by SRC inhibits ulterior autophosphorylation at Tyr-400. Activated by phorbol myristate acetate, phosphatidic acid and poly-Lys. Binding (via SH2 domain) of HCLS1 that is already phosphorylated by SYK strongly increases kinase activity. Non-receptor tyrosine-protein kinase that transmits signals from cell surface receptors devoid of kinase activity and contributes to the regulation of immune responses, including neutrophil, monocyte, macrophage and mast cell functions, cytoskeleton remodeling in response to extracellular stimuli, phagocytosis, cell adhesion and migration. Promotes mast cell degranulation, release of inflammatory cytokines and IgE-mediated anaphylaxis. Acts downstream of receptors that bind the Fc region of immunoglobulins, such as MS4A2/FCER1B, FCER1G and FCGR2. Acts downstream of ITGB1 and ITGB2, and regulates actin cytoskeleton reorganization, cell spreading and adhesion. Depending on the context, activates or inhibits cellular responses. Functions as a negative regulator of ITGB2 signaling, phagocytosis and SYK activity in monocytes. Required for normal ITGB1 and ITGB2 signaling, normal cell spreading and adhesion in neutrophils and macrophages. Functions as a positive regulator of cell migration and regulates cytoskeleton reorganization via RAC1 activation. Phosphorylates SYK (in vitro) and promotes SYK-dependent activation of AKT1 and MAP kinase signaling. Phosphorylates PLD2 in antigen-stimulated mast cells, leading to PLD2 activation and the production of the signaling molecules lysophosphatidic acid and diacylglycerol. Promotes activation of PIK3R1. Phosphorylates FASLG, and thereby regulates its ubiquitination and subsequent internalization. Phosphorylates ABL1. Promotes phosphorylation of CBL, CTTN, PIK3R1, PTK2/FAK1, PTK2B/PYK2 and VAV2. Phosphorylates HCLS1 that has already been phosphorylated by SYK, but not unphosphorylated HCLS1. Together with CLNK, it acts as a negative regulator of natural killer cell-activating receptors and inhibits interferon-gamma production. The protein is Tyrosine-protein kinase Fgr (Fgr) of Mus musculus (Mouse).